Here is a 377-residue protein sequence, read N- to C-terminus: Aspartate aminotransferase (377 aa).

L-aspartate-binding residues include Gly-37, Trp-123, and Asn-173. Lys-234 is modified (N6-(pyridoxal phosphate)lysine). Arg-353 is an L-aspartate binding site.

It belongs to the class-I pyridoxal-phosphate-dependent aminotransferase family. Homodimer. Pyridoxal 5'-phosphate is required as a cofactor.

Its subcellular location is the cytoplasm. It carries out the reaction L-aspartate + 2-oxoglutarate = oxaloacetate + L-glutamate. This Thermotoga maritima (strain ATCC 43589 / DSM 3109 / JCM 10099 / NBRC 100826 / MSB8) protein is Aspartate aminotransferase (aspC).